Here is an 856-residue protein sequence, read N- to C-terminus: Valine--tRNA ligase (856 aa).

Positions 47 to 57 match the 'HIGH' region motif; it reads PTASGVLHIGH. Positions 578–582 match the 'KMSKS' region motif; sequence KMSKS. An ATP-binding site is contributed by Lys-581.

Belongs to the class-I aminoacyl-tRNA synthetase family. ValS type 2 subfamily. Monomer.

The protein resides in the cytoplasm. The enzyme catalyses tRNA(Val) + L-valine + ATP = L-valyl-tRNA(Val) + AMP + diphosphate. Catalyzes the attachment of valine to tRNA(Val). As ValRS can inadvertently accommodate and process structurally similar amino acids such as threonine, to avoid such errors, it has a 'posttransfer' editing activity that hydrolyzes mischarged Thr-tRNA(Val) in a tRNA-dependent manner. This is Valine--tRNA ligase from Tropheryma whipplei (strain TW08/27) (Whipple's bacillus).